The chain runs to 628 residues: Neutral/alkaline invertase 1, mitochondrial (628 aa).

The transit peptide at 1 to 35 (MAAAAISHLRRGAPRHARALLYLSTRRFSSSSAAG) directs the protein to the mitochondrion. Residues 79 to 90 (ASSAPPLESPPI) show a composition bias toward low complexity. Residues 79-113 (ASSAPPLESPPIEELPDDATPPPEEEPGLPAPEKD) are disordered.

It belongs to the glycosyl hydrolase 100 family. Expressed in roots, leaf and stems.

The protein localises to the mitochondrion. It carries out the reaction Hydrolysis of terminal non-reducing beta-D-fructofuranoside residues in beta-D-fructofuranosides.. Its function is as follows. Mitochondrial invertase that cleaves sucrose into glucose and fructose. The chain is Neutral/alkaline invertase 1, mitochondrial from Oryza sativa subsp. japonica (Rice).